Reading from the N-terminus, the 109-residue chain is Co-chaperonin GroES (109 aa).

The protein belongs to the GroES chaperonin family. Heptamer of 7 subunits arranged in a ring. Interacts with the chaperonin GroEL.

The protein localises to the cytoplasm. Functionally, together with the chaperonin GroEL, plays an essential role in assisting protein folding. The GroEL-GroES system forms a nano-cage that allows encapsulation of the non-native substrate proteins and provides a physical environment optimized to promote and accelerate protein folding. GroES binds to the apical surface of the GroEL ring, thereby capping the opening of the GroEL channel. The chain is Co-chaperonin GroES from Methanosarcina acetivorans (strain ATCC 35395 / DSM 2834 / JCM 12185 / C2A).